Here is a 218-residue protein sequence, read N- to C-terminus: 2-phospho-L-lactate guanylyltransferase (218 aa).

This sequence belongs to the CofC family. Homodimer.

It catalyses the reaction (2S)-2-phospholactate + GTP + H(+) = (2S)-lactyl-2-diphospho-5'-guanosine + diphosphate. It functions in the pathway cofactor biosynthesis; coenzyme F420 biosynthesis. In terms of biological role, guanylyltransferase that catalyzes the activation of (2S)-2-phospholactate (2-PL) as (2S)-lactyl-2-diphospho-5'-guanosine, via the condensation of 2-PL with GTP. It is involved in the biosynthesis of coenzyme F420, a hydride carrier cofactor. In Methanocaldococcus fervens (strain DSM 4213 / JCM 15782 / AG86) (Methanococcus fervens), this protein is 2-phospho-L-lactate guanylyltransferase.